The primary structure comprises 472 residues: Aspartyl/glutamyl-tRNA(Asn/Gln) amidotransferase subunit B (472 aa).

It belongs to the GatB/GatE family. GatB subfamily. In terms of assembly, heterotrimer of A, B and C subunits.

The enzyme catalyses L-glutamyl-tRNA(Gln) + L-glutamine + ATP + H2O = L-glutaminyl-tRNA(Gln) + L-glutamate + ADP + phosphate + H(+). It carries out the reaction L-aspartyl-tRNA(Asn) + L-glutamine + ATP + H2O = L-asparaginyl-tRNA(Asn) + L-glutamate + ADP + phosphate + 2 H(+). Functionally, allows the formation of correctly charged Asn-tRNA(Asn) or Gln-tRNA(Gln) through the transamidation of misacylated Asp-tRNA(Asn) or Glu-tRNA(Gln) in organisms which lack either or both of asparaginyl-tRNA or glutaminyl-tRNA synthetases. The reaction takes place in the presence of glutamine and ATP through an activated phospho-Asp-tRNA(Asn) or phospho-Glu-tRNA(Gln). The polypeptide is Aspartyl/glutamyl-tRNA(Asn/Gln) amidotransferase subunit B (Mycoplasmopsis agalactiae (strain NCTC 10123 / CIP 59.7 / PG2) (Mycoplasma agalactiae)).